A 413-amino-acid chain; its full sequence is Nucleoporin NUP42 (413 aa).

A C3H1-type zinc finger spans residues 1–25 (MTICQFFLQGRCRFGDRCWNEHPRG). FG repeat units follow at residues 14 to 15 (FG), 79 to 80 (FG), 217 to 218 (FG), 225 to 226 (FG), 269 to 270 (FG), and 313 to 314 (FG). The tract at residues 252–293 (GNAAAVGSSAAASNPPTFGVTSSPSVPNPVGSGNSSAPSAAS) is disordered. Over residues 321–357 (SSSTAPLPVSATPSAATGTSQSGASSASAAQTAGASG) the composition is skewed to low complexity. The disordered stretch occupies residues 321–369 (SSSTAPLPVSATPSAATGTSQSGASSASAAQTAGASGHNVTSAPSAVPN).

Probable component of the nuclear pore complex (NPC).

The protein localises to the nucleus. Its subcellular location is the nuclear pore complex. The protein resides in the nucleus membrane. Required for the export of mRNAs containing poly(A) tails from the nucleus into the cytoplasm. This chain is Nucleoporin NUP42 (NUP42), found in Gallus gallus (Chicken).